A 227-amino-acid chain; its full sequence is MASPNAMAAAVDPIWEDLEEEEEELEEEQFVLVELSGIIDSDFLSKCENKCKILGIDTERPIMQVDSYVFAGEYEDTLGTCVIFEEGVERVDPEGTDKTVLKYKCHTMKKLSMTRTLLTEKKEGEENIDGVEWLQMKDNDFSYRPNMICSFLHEHEDEAAGPASDKPVELEDQESQMKGSAEQTQEQEKVEHSEVEDPAPSGETPSEMESSVFMGTQDGNVSQNNQS.

Residues 157–227 (DEAAGPASDK…DGNVSQNNQS (71 aa)) form a disordered region. Basic and acidic residues predominate over residues 186 to 195 (EQEKVEHSEV). Polar residues predominate over residues 203 to 227 (ETPSEMESSVFMGTQDGNVSQNNQS).

Belongs to the TFIIIC subunit 6 family. Part of the TFIIIC subcomplex TFIIIC2, consisting of six subunits, GTF3C1, GTF3C2, GTF3C3, GTF3C4, GTF3C5 and GTF3C6. Interacts with GTF3C4 and GTF3C5.

It localises to the nucleus. Involved in RNA polymerase III-mediated transcription. Integral, tightly associated component of the DNA-binding TFIIIC2 subcomplex that directly binds tRNA and virus-associated RNA promoters. This Mus musculus (Mouse) protein is General transcription factor 3C polypeptide 6.